A 469-amino-acid polypeptide reads, in one-letter code: Glutamate--tRNA ligase 1 (469 aa).

The 'HIGH' region motif lies at 10–20; it reads PSPTGYLHIGG. Positions 99, 101, 126, and 128 each coordinate Zn(2+). The 'KMSKS' region motif lies at 237–241; that stretch reads RLSKR. K240 serves as a coordination point for ATP.

It belongs to the class-I aminoacyl-tRNA synthetase family. Glutamate--tRNA ligase type 1 subfamily. In terms of assembly, monomer. Zn(2+) serves as cofactor.

Its subcellular location is the cytoplasm. The enzyme catalyses tRNA(Glu) + L-glutamate + ATP = L-glutamyl-tRNA(Glu) + AMP + diphosphate. Functionally, catalyzes the attachment of glutamate to tRNA(Glu) in a two-step reaction: glutamate is first activated by ATP to form Glu-AMP and then transferred to the acceptor end of tRNA(Glu). This is Glutamate--tRNA ligase 1 from Coxiella burnetii (strain CbuK_Q154) (Coxiella burnetii (strain Q154)).